The following is a 213-amino-acid chain: 3-isopropylmalate dehydratase small subunit (213 aa).

This sequence belongs to the LeuD family. LeuD type 1 subfamily. In terms of assembly, heterodimer of LeuC and LeuD.

It catalyses the reaction (2R,3S)-3-isopropylmalate = (2S)-2-isopropylmalate. It participates in amino-acid biosynthesis; L-leucine biosynthesis; L-leucine from 3-methyl-2-oxobutanoate: step 2/4. Its function is as follows. Catalyzes the isomerization between 2-isopropylmalate and 3-isopropylmalate, via the formation of 2-isopropylmaleate. In Neisseria meningitidis serogroup A / serotype 4A (strain DSM 15465 / Z2491), this protein is 3-isopropylmalate dehydratase small subunit.